Here is a 440-residue protein sequence, read N- to C-terminus: uncharacterized protein (440 aa).

This is an uncharacterized protein from Saccharolobus islandicus (Sulfolobus islandicus).